The chain runs to 675 residues: Protein C-mannosyl-transferase DPY19L1 (675 aa).

A disordered region spans residues 1–22; the sequence is MEGRPPPEGRPPPRPRTGRAPR. 11 consecutive transmembrane segments (helical) span residues 66–88, 156–176, 186–208, 236–254, 260–279, 286–303, 309–325, 334–354, 414–434, 449–469, and 491–511; these read LYYS…WMIM, ACFY…LFFI, LGGL…VMWT, LYRG…FMLP, FVLL…GYID, IIYI…LMFG, TSYY…ILAM, VSEL…TVIL, VVLV…WGVL, GELV…ILIM, and LFGW…ILAA.

The protein belongs to the dpy-19 family. In terms of tissue distribution, widely expressed.

The protein resides in the endoplasmic reticulum membrane. It carries out the reaction L-tryptophyl-[protein] + a di-trans,poly-cis-dolichyl beta-D-mannosyl phosphate = C-alpha-D-mannosyl-L-tryptophyl-[protein] + a di-trans,poly-cis-dolichyl phosphate + H(+). The protein operates within protein modification; protein glycosylation. Functionally, C-mannosyltransferase that mediates the C-mannosylation tryptophan residues on target proteins. The reaction occurs on the luminal side of the endoplasmic reticulum and involves the transfer of a mannose unit from a dolichylphosphate mannose (Dol-P-Man) donor to an acceptor protein containing a WxxW consensus sequence. C-mannosylates the first two tryptophans in the WxxWxxWxxC motif in thrombospondin (TSP) type-1 of UNC5A. Regulates neurite extension during development. The protein is Protein C-mannosyl-transferase DPY19L1 (DPY19L1) of Homo sapiens (Human).